An 888-amino-acid polypeptide reads, in one-letter code: MINYTSTFTLNRQKYHYIDLVKASKDYDIELDSLPYTIKILLESLLRKHDDICVTKNNIETLFHYNSKAPQGEVPFKPSRVILQDFTGVPVVVDLASMRDAVVENGGSPDLINPEIPVDLVIDHSVQVDFFGNQDAFDANIDLEFERNNERYEFLKWAEKTFENYRAVPPATGIIHQVNLEFLSDVIINKDGFLYPDSMFGTDSHTTMINGIGVLGWGVGGIEAEAAMLGEASYFPIPEVIGVRLYGELPKVATATDLALKVTQKLRLENVVGKFVEFFGPGLAGLSLADRATVANMAPEYGATCGYFPIDDETLNYMKLTNRSAEHIALTKEYAKRNHLYHDMTNLPSYTKIVEIDLSAIKPSISGPKRPQDLIELGQAKEEFQASLVRQFGVRGFGLGADELAKKATVHFDDGQELEVKTGHVAIAAITSCTNTSNPYVLLSAGLLAKKAVERGLSVAKTVKTSLAPGSKVVTAYLRKSGLQPYLDKLGFNLVGYGCTTCIGNSGDLVPEVAKAVQEKDLLVSAVLSGNRNFEGRVNPLVKANFLASPPLVVAYALAGTTNIDLTSKPLGYDKNGQAVYLEDIMPAKEEVLSYIEQFVTAELFEEEYGHVFSDSQKWNQIETENSKNYQWNQVSTYIQNPPYFENLTNTENKIDLSALKVLAKFGDSVTTDHISPAGNIARNSPAARYLEENGVTYAEFNSYGSRRGNHEVMMRGTFANIRIKNELADGKIGGYTKYEGEILPIYEAAMNYKKNGVSTIVIAGKDYGMGSSRDWAAKGANLLGVKVVLAESFERIHRSNLVMMGILPLQFLDGQTAESLQLTGYETYTVELPEQPQVHDIVKVKATSKEGTKEFQVLLRFDADADIRYYQNGGILPMVVRKKLNGG.

[4Fe-4S] cluster-binding residues include Cys-433, Cys-499, and Cys-502.

The protein belongs to the aconitase/IPM isomerase family. As to quaternary structure, monomer. It depends on [4Fe-4S] cluster as a cofactor.

The catalysed reaction is citrate = D-threo-isocitrate. It catalyses the reaction (2S,3R)-3-hydroxybutane-1,2,3-tricarboxylate = 2-methyl-cis-aconitate + H2O. The protein operates within carbohydrate metabolism; tricarboxylic acid cycle; isocitrate from oxaloacetate: step 2/2. It participates in organic acid metabolism; propanoate degradation. In terms of biological role, involved in the catabolism of short chain fatty acids (SCFA) via the tricarboxylic acid (TCA)(acetyl degradation route) and probably the 2-methylcitrate cycle I (propionate degradation route). Catalyzes the reversible isomerization of citrate to isocitrate via cis-aconitate. Could catalyze the hydration of 2-methyl-cis-aconitate to yield (2R,3S)-2-methylisocitrate. The apo form of AcnA functions as a RNA-binding regulatory protein. This is Aconitate hydratase A (acn) from Streptococcus mutans serotype c (strain ATCC 700610 / UA159).